Consider the following 836-residue polypeptide: Eukaryotic translation initiation factor 3 subunit C (836 aa).

Residues 1 to 97 (MSRFFVSGYD…RRVVKSAKEK (97 aa)) form a disordered region. The span at 13–55 (SSSEEEDLLTSSEEELMSSEQESDSEFDDEFANDDDSDSSDSD) shows a compositional bias: acidic residues. The span at 86–97 (EGRRVVKSAKEK) shows a compositional bias: basic and acidic residues. The PCI domain occupies 586–761 (FHMHINLELL…KSINFVSSEH (176 aa)). The disordered stretch occupies residues 783 to 817 (DKNEKTASNGHGRKTTQQQQQQQQKEQREQTHDEN). Low complexity predominate over residues 797–806 (TTQQQQQQQQ). The span at 807–817 (KEQREQTHDEN) shows a compositional bias: basic and acidic residues.

The protein belongs to the eIF-3 subunit C family. In terms of assembly, component of the eukaryotic translation initiation factor 3 (eIF-3) complex.

The protein localises to the cytoplasm. Component of the eukaryotic translation initiation factor 3 (eIF-3) complex, which is involved in protein synthesis of a specialized repertoire of mRNAs and, together with other initiation factors, stimulates binding of mRNA and methionyl-tRNAi to the 40S ribosome. The eIF-3 complex specifically targets and initiates translation of a subset of mRNAs involved in cell proliferation. The chain is Eukaryotic translation initiation factor 3 subunit C from Meyerozyma guilliermondii (strain ATCC 6260 / CBS 566 / DSM 6381 / JCM 1539 / NBRC 10279 / NRRL Y-324) (Yeast).